The sequence spans 587 residues: Large T antigen (587 aa).

Residues 6 to 82 enclose the J domain; that stretch reads RLTELLCLPV…PEESGYATFE (77 aa). The segment at 58 to 78 is disordered; it reads EGLRADETLEDSDPEPEESGY. Acidic residues predominate over residues 65 to 75; it reads TLEDSDPEPEE. Positions 102 to 219 form a DNA-binding region, T-ag OBD; sequence CMQTYFSVNE…EECSIDMNVV (118 aa). The segment at 221 to 319 adopts a T-ag D1-type zinc-finger fold; that stretch reads EKQFMHAMLY…KRFRSATMTR (99 aa). Zn(2+)-binding residues include Cys258, Cys261, His275, and His279. The SF3 helicase domain maps to 360–520; sequence PDVDVIVDIL…KVYAKALRNN (161 aa). ATP is bound at residue 386-393; the sequence is GPVNTGKT.

In terms of assembly, forms homohexamers in the presence of ATP. Interacts with host HDAC1. Interacts (via LXCXE domain) with host RB1; the interaction induces the aberrant dissociation of RB1-E2F1 complex thereby disrupting RB1's activity. Interacts (via LXCXE domain) with host pRB-related proteins RBL1 and RBL2. Interacts (via C-terminus) with host TOP1 and POLA1 allowing DNA replication. Interacts with host TP53, inhibiting TP53 binding to DNA. Interacts with host preinitiation complex components TBP, TFIIA and TFIID to regulate transcription initiation. The cofactor is Mg(2+). Phosphorylated on both serine and threonine residues. Small t antigen inhibits the dephosphorylation by the AC form of PP2A. Post-translationally, O-Glycosylated near the C-terminal region. In terms of processing, acetylated by CBP in a TP53-dependent manner.

Its subcellular location is the host nucleus. It catalyses the reaction Couples ATP hydrolysis with the unwinding of duplex DNA by translocating in the 3'-5' direction.. The enzyme catalyses ATP + H2O = ADP + phosphate + H(+). In terms of biological role, isoform large T antigen is a key early protein essential for both driving viral replication and inducing cellular transformation. Plays a role in viral genome replication by driving entry of quiescent cells into the cell cycle and by autoregulating the synthesis of viral early mRNA. Displays highly oncogenic activities by corrupting the host cellular checkpoint mechanisms that guard cell division and the transcription, replication, and repair of DNA. Participates in the modulation of cellular gene expression preceeding viral DNA replication. This step involves binding to host key cell cycle regulators retinoblastoma protein RB1/pRb and TP53. Induces the disassembly of host E2F1 transcription factors from RB1, thus promoting transcriptional activation of E2F1-regulated S-phase genes. Inhibits host TP53 binding to DNA, abrogating the ability of TP53 to stimulate gene expression. Plays the role of a TFIID-associated factor (TAF) in transcription initiation for all three RNA polymerases, by stabilizing the TBP-TFIIA complex on promoters. Initiates viral DNA replication and unwinding via interactions with the viral origin of replication. Binds two adjacent sites in the SV40 origin. The replication fork movement is facilitated by Large T antigen helicase activity. Has processive 3'-5' DNA helicase activity which requires a short 3' single-stranded region and ATP. Activates the transcription of viral late mRNA, through host TBP and TFIIA stabilization. Interferes with histone deacetylation mediated by HDAC1, leading to activation of transcription. This chain is Large T antigen, found in Budgerigar fledgling disease virus (BFPyV).